A 299-amino-acid polypeptide reads, in one-letter code: Hemolysin C homolog (299 aa).

CBS domains follow at residues 80–142 (MVPR…NGRL) and 145–202 (LIRK…IDDE).

It belongs to the UPF0053 family. Hemolysin C subfamily.

The polypeptide is Hemolysin C homolog (tlyC) (Rickettsia rickettsii (strain Sheila Smith)).